Consider the following 379-residue polypeptide: Dihydroflavonol 4-reductase (379 aa).

2 residues coordinate NADP(+): Lys56 and Tyr175.

This sequence belongs to the NAD(P)-dependent epimerase/dehydratase family. Dihydroflavonol-4-reductase subfamily. As to expression, expressed in both leaf and hypocotyl tissues.

It catalyses the reaction a (2R,3S,4S)-leucoanthocyanidin + NADP(+) = a (2R,3R)-dihydroflavonol + NADPH + H(+). The catalysed reaction is (2S)-flavan-4-ol + NADP(+) = (2S)-flavanone + NADPH + H(+). It functions in the pathway pigment biosynthesis; anthocyanin biosynthesis. Functionally, bifunctional enzyme involved in flavonoid metabolism. The sequence is that of Dihydroflavonol 4-reductase from Solanum lycopersicum (Tomato).